A 777-amino-acid polypeptide reads, in one-letter code: Endonuclease MutS2 (777 aa).

328–335 (GPNTGGKT) contributes to the ATP binding site. In terms of domain architecture, Smr spans 702 to 777 (LDLRGKRYEE…GSGATIVIFK (76 aa)).

Belongs to the DNA mismatch repair MutS family. MutS2 subfamily. As to quaternary structure, homodimer. Binds to stalled ribosomes, contacting rRNA.

Endonuclease that is involved in the suppression of homologous recombination and thus may have a key role in the control of bacterial genetic diversity. Functionally, acts as a ribosome collision sensor, splitting the ribosome into its 2 subunits. Detects stalled/collided 70S ribosomes which it binds and splits by an ATP-hydrolysis driven conformational change. Acts upstream of the ribosome quality control system (RQC), a ribosome-associated complex that mediates the extraction of incompletely synthesized nascent chains from stalled ribosomes and their subsequent degradation. Probably generates substrates for RQC. This is Endonuclease MutS2 from Streptococcus gordonii (strain Challis / ATCC 35105 / BCRC 15272 / CH1 / DL1 / V288).